The chain runs to 755 residues: Polyribonucleotide nucleotidyltransferase (755 aa).

Positions 527 and 533 each coordinate Mg(2+). Residues 593–652 (PRITTIKVPVDKIGEVIGPKGKMINSITEETGANISIEDDGTVFVGAADGASAQAAIDKI) form the KH domain. The 70-residue stretch at 664–733 (GERFLGTVVK…NRGKISLVPV (70 aa)) folds into the S1 motif domain. The tract at residues 734–755 (GEEDAAEAPAPAEAQPADAVTQ) is disordered. Over residues 740-755 (EAPAPAEAQPADAVTQ) the composition is skewed to low complexity.

Belongs to the polyribonucleotide nucleotidyltransferase family. The cofactor is Mg(2+).

The protein resides in the cytoplasm. The catalysed reaction is RNA(n+1) + phosphate = RNA(n) + a ribonucleoside 5'-diphosphate. Functionally, involved in mRNA degradation. Catalyzes the phosphorolysis of single-stranded polyribonucleotides processively in the 3'- to 5'-direction. The protein is Polyribonucleotide nucleotidyltransferase of Mycobacteroides abscessus (strain ATCC 19977 / DSM 44196 / CCUG 20993 / CIP 104536 / JCM 13569 / NCTC 13031 / TMC 1543 / L948) (Mycobacterium abscessus).